We begin with the raw amino-acid sequence, 474 residues long: Aspartic-type endopeptidase ctsD (474 aa).

Positions Met-1 to Ala-19 are cleaved as a signal peptide. A Peptidase A1 domain is found at Tyr-106–Ala-413. Asp-124 is a catalytic residue. N-linked (GlcNAc...) asparagine glycosylation is found at Asn-189, Asn-197, Asn-275, and Asn-301. Residue Asp-307 is part of the active site. Asn-338, Asn-344, and Asn-414 each carry an N-linked (GlcNAc...) asparagine glycan. The GPI-anchor amidated serine moiety is linked to residue Ser-452. Residues Ala-453–Val-474 constitute a propeptide, removed in mature form.

The protein belongs to the peptidase A1 family.

Its subcellular location is the cell membrane. Secreted aspartic-type endopeptidase which is secreted and contributes to virulence. This chain is Aspartic-type endopeptidase ctsD (ctsD), found in Aspergillus fumigatus (strain ATCC MYA-4609 / CBS 101355 / FGSC A1100 / Af293) (Neosartorya fumigata).